Consider the following 630-residue polypeptide: Neuronal acetylcholine receptor subunit alpha-4 (630 aa).

A signal peptide spans 1–30 (MANSGTGAPPPLLLLPLLLLLGTGLLPASS). The Extracellular segment spans residues 32 to 249 (IETRAHAEER…IIRRLPLFYT (218 aa)). Asparagine 59 carries N-linked (GlcNAc...) asparagine glycosylation. Residues valine 78 and glutamate 80 each coordinate Ca(2+). Residues asparagine 109 and asparagine 176 are each glycosylated (N-linked (GlcNAc...) asparagine). 2 disulfides stabilise this stretch: cysteine 163-cysteine 177 and cysteine 227-cysteine 228. The chain crosses the membrane as a helical span at residues 250-270 (INLIIPCLLISCLTVLVFYLP). A lipid anchor (S-palmitoyl cysteine) is attached at cysteine 273. The next 2 helical transmembrane spans lie at 279-299 (LCIS…EIIP) and 313-333 (LLFT…VLNV). Topologically, residues 334–604 (HHRSPRTHTM…WKYVAMVIDR (271 aa)) are cytoplasmic. Disordered regions lie at residues 418-463 (TAVE…SGAP) and 505-526 (SLAD…SQLP). Serine 428 carries the phosphoserine modification. Over residues 434–443 (PDLKTSEVEK) the composition is skewed to basic and acidic residues. The segment covering 447–457 (CPSPGSCPPPK) has biased composition (pro residues). A phosphoserine mark is found at serine 542 and serine 545. Residues 605 to 625 (IFLWMFIIVCLLGTVGLFLPP) form a helical membrane-spanning segment.

It belongs to the ligand-gated ion channel (TC 1.A.9) family. Acetylcholine receptor (TC 1.A.9.1) subfamily. Alpha-4/CHRNA4 sub-subfamily. As to quaternary structure, neuronal AChR is composed of two different types of subunits: alpha and beta. CHRNA4 forms heteropentameric neuronal acetylcholine receptors with CHRNB2 and CHRNB4, as well as CHRNA5 and CHRNB3 as accesory subunits. Found in two major stoichiometric forms, LS (low agonist sensitivity): (CHRNA4)3:(CHRNB2)2 and HS (high agonist sensitivity): (CHRNA4)2:(CHRNB2)3, the two stoichiometric forms differ in their unitary conductance, calcium permeability, ACh sensitivity and potentiation by divalent cation. Cells produce predominantly an (CHRNA4)3:(CHRNB2)2 nAChR. The (CHRNA4)2:(CHRNB2)3 expression is selectively up-regulated by nicotine and has lower single channel conductance and calcium permeability. In the striatum, also forms CHRNA4:CHRNA6:CHRNB2 complexes. Also found in the stoichiometric form: (CHRNA4:CHRNB2)2:CHRNB3. Interacts with RIC3; which is required for proper folding and assembly. Interacts with LYPD6. In terms of tissue distribution, in various regions of the central nervous system. Expressed in hippocampal neurons.

Its subcellular location is the presynaptic cell membrane. It is found in the cell membrane. The catalysed reaction is Ca(2+)(in) = Ca(2+)(out). The enzyme catalyses K(+)(in) = K(+)(out). It carries out the reaction Na(+)(in) = Na(+)(out). With respect to regulation, activated by a myriad of ligands such as acetylcholine, cytisine, nicotine, choline and epibatidine. Channel potentiation by calcium is stoichiometry-selective, CHRNA4:CHRNB2 nACh receptor is achieved by calcium association with topographically distinct sites framed by anionic residues within the CHRNA4 subunit and between the CHRNA4 and CHRNB2 subunits. nAChR activity is inhibited by the antagonist alpha-conotoxins BuIA, PnIA, GID and MII, small disulfide-constrained peptides from cone snails. Functionally, component of neuronal acetylcholine receptors (nAChRs) that function as pentameric, ligand-gated cation channels with high calcium permeability among other activities. nAChRs are excitatory neurotrasnmitter receptors formed by a collection of nAChR subunits known to mediate synaptic transmission in the nervous system and the neuromuscular junction. Each nAchR subunit confers differential attributes to channel properties, including activation, deactivation and desensitization kinetics, pH sensitivity, cation permeability, and binding to allosteric modulators. CHRNA4 forms heteropentameric neuronal acetylcholine receptors with CHRNB2 and CHRNB4, as well as CHRNA5 and CHRNB3 as accesory subunits. Is the most abundant nAChR subtype expressed in the central nervous system. Found in two major stoichiometric forms,(CHRNA4)3:(CHRNB2)2 and (CHRNA4)2:(CHRNB2)3, the two stoichiometric forms differ in their unitary conductance, calcium permeability, ACh sensitivity and potentiation by divalent cation. Involved in the modulation of calcium-dependent signaling pathways, influences the release of neurotransmitters, including dopamine, glutamate and GABA. The sequence is that of Neuronal acetylcholine receptor subunit alpha-4 (Chrna4) from Rattus norvegicus (Rat).